The primary structure comprises 508 residues: tRNA-2-methylthio-N(6)-dimethylallyladenosine synthase (508 aa).

Residues 13-131 (KTYEVRTYGC…LPVLLERARV (119 aa)) form the MTTase N-terminal domain. Residues Cys-22, Cys-60, Cys-94, Cys-168, Cys-172, and Cys-175 each coordinate [4Fe-4S] cluster. Residues 154-385 (RESAYAAWVS…ALQEEISWDE (232 aa)) form the Radical SAM core domain. Residues 387–455 (KKQVGRTLEL…PHHLLAEGPV (69 aa)) form the TRAM domain.

It belongs to the methylthiotransferase family. MiaB subfamily. Monomer. It depends on [4Fe-4S] cluster as a cofactor.

It localises to the cytoplasm. It catalyses the reaction N(6)-dimethylallyladenosine(37) in tRNA + (sulfur carrier)-SH + AH2 + 2 S-adenosyl-L-methionine = 2-methylsulfanyl-N(6)-dimethylallyladenosine(37) in tRNA + (sulfur carrier)-H + 5'-deoxyadenosine + L-methionine + A + S-adenosyl-L-homocysteine + 2 H(+). Catalyzes the methylthiolation of N6-(dimethylallyl)adenosine (i(6)A), leading to the formation of 2-methylthio-N6-(dimethylallyl)adenosine (ms(2)i(6)A) at position 37 in tRNAs that read codons beginning with uridine. The polypeptide is tRNA-2-methylthio-N(6)-dimethylallyladenosine synthase (Streptomyces avermitilis (strain ATCC 31267 / DSM 46492 / JCM 5070 / NBRC 14893 / NCIMB 12804 / NRRL 8165 / MA-4680)).